The sequence spans 237 residues: Protein YIPF4 (237 aa).

Residues 1-106 (MQFSPTNGDF…FNRQVVRDNP (106 aa)) are Cytoplasmic-facing. A helical transmembrane segment spans residues 107–127 (DFWGPLAVVLLFSMISIYGQF). Residues 128 to 131 (RVVS) lie on the Lumenal side of the membrane. Residues 132-152 (WIITIWIFGSLTIFLLARVLG) traverse the membrane as a helical segment. Residues 153–160 (GEVSYGQV) are Cytoplasmic-facing. The helical transmembrane segment at 161 to 181 (LGVIGYSLLPLIVIAPLLLVI) threads the bilayer. At 182 to 188 (GGFEVVS) the chain is on the lumenal side. A helical transmembrane segment spans residues 189 to 209 (TLIKLFGVFWAAYSAASLLVG). Residues 210–216 (DEFKTKK) lie on the Cytoplasmic side of the membrane. Residues 217 to 237 (PLLIYPIFLLYIYFLSLYTGV) form a helical membrane-spanning segment.

This sequence belongs to the YIP1 family.

It is found in the golgi apparatus. Its subcellular location is the cis-Golgi network membrane. Involved in the maintenance of the Golgi structure. The polypeptide is Protein YIPF4 (yipf4) (Danio rerio (Zebrafish)).